Reading from the N-terminus, the 986-residue chain is Centrosomal protein of 120 kDa (986 aa).

Residues 1–112 (MVSKSDQLLI…QETKQAPKWY (112 aa)) form the C2 1 domain. Residues 350-424 (ELKTQNEHEP…PNPKASSSVP (75 aa)) are disordered. A compositionally biased stretch (polar residues) spans 377 to 394 (GPKSPTVSPVPSHNQSPP). Residues 433 to 566 (TSNASEVASG…LSSEKTRFLG (134 aa)) form the C2 2 domain. Residues 669 to 925 (ENQLKQKELA…KQYQDSTEIA (257 aa)) are a coiled coil. Residues 914-937 (EQKQYQDSTEIASGKKDGPHGSVL) form a disordered region. Residues 915 to 924 (QKQYQDSTEI) are compositionally biased toward polar residues. S935 bears the Phosphoserine mark.

Belongs to the CEP120 family. Interacts with TACC2, TACC3, CCDC52, TALPID3.

It is found in the cytoplasm. The protein resides in the cytoskeleton. It localises to the microtubule organizing center. The protein localises to the centrosome. Plays a role in the microtubule-dependent coupling of the nucleus and the centrosome. Involved in the processes that regulate centrosome-mediated interkinetic nuclear migration (INM) of neural progenitors and for proper positioning of neurons during brain development. Also implicated in the migration and selfrenewal of neural progenitors. Required for centriole duplication and maturation during mitosis and subsequent ciliogenesis. Required for the recruitment of CEP295 to the proximal end of new-born centrioles at the centriolar microtubule wall during early S phase in a PLK4-dependent manner. In Homo sapiens (Human), this protein is Centrosomal protein of 120 kDa (CEP120).